The chain runs to 632 residues: Biosynthetic arginine decarboxylase (632 aa).

Lysine 101 is modified (N6-(pyridoxal phosphate)lysine). Residue 281–291 coordinates substrate; the sequence is FDVGGGLGVDY.

Belongs to the Orn/Lys/Arg decarboxylase class-II family. SpeA subfamily. The cofactor is Mg(2+). It depends on pyridoxal 5'-phosphate as a cofactor.

It catalyses the reaction L-arginine + H(+) = agmatine + CO2. It functions in the pathway amine and polyamine biosynthesis; agmatine biosynthesis; agmatine from L-arginine: step 1/1. Catalyzes the biosynthesis of agmatine from arginine. This is Biosynthetic arginine decarboxylase from Salmonella agona (strain SL483).